The chain runs to 85 residues: Small ribosomal subunit protein eS27 (85 aa).

A C4-type zinc finger spans residues 38 to 60 (CHGCRTITTVFSHAQNVVICSSC).

Belongs to the eukaryotic ribosomal protein eS27 family. It depends on Zn(2+) as a cofactor.

This Dictyostelium discoideum (Social amoeba) protein is Small ribosomal subunit protein eS27 (rps27).